A 144-amino-acid polypeptide reads, in one-letter code: UPF0102 protein sce2912 (144 aa).

Belongs to the UPF0102 family.

The chain is UPF0102 protein sce2912 from Sorangium cellulosum (strain So ce56) (Polyangium cellulosum (strain So ce56)).